The following is a 59-amino-acid chain: Large ribosomal subunit protein uL30 (59 aa).

This sequence belongs to the universal ribosomal protein uL30 family. In terms of assembly, part of the 50S ribosomal subunit.

The protein is Large ribosomal subunit protein uL30 of Desulforamulus reducens (strain ATCC BAA-1160 / DSM 100696 / MI-1) (Desulfotomaculum reducens).